Consider the following 595-residue polypeptide: Actin-histidine N-methyltransferase (595 aa).

Residues 1–22 (MGKKSRVKTQKSGTGATATVSP) form a disordered region. Positions 10-20 (QKSGTGATATV) are enriched in polar residues. Residues arginine 75, 104-106 (EGF), arginine 254, 275-279 (DMCNH), and 325-327 (SGF) contribute to the S-adenosyl-L-methionine site. The region spanning 94 to 314 (EGFEMVNFKE…AGEQIYIFYG (221 aa)) is the SET domain. Serine 513 bears the Phosphoserine mark. A compositionally biased stretch (polar residues) spans 549–573 (ENGLVNGENSIPNGTRSENENLNQE). A disordered region spans residues 549–595 (ENGLVNGENSIPNGTRSENENLNQEGSKRAVEDAKGSSSDSTDEVKE). Residues 574-583 (GSKRAVEDAK) are compositionally biased toward basic and acidic residues.

The protein belongs to the class V-like SAM-binding methyltransferase superfamily. SETD3 actin-histidine methyltransferase family. Interacts with MYOD1. Phosphorylated by GSK3B, which is required for recognition by the SCF(FBXW7) complex and subsequent degradation. In terms of processing, ubiquitinated by the SCF(FBXW7) complex following phosphorylation by GSK3B, leading to its degradation by the proteasome.

It localises to the cytoplasm. The protein localises to the nucleus. The catalysed reaction is L-histidyl-[protein] + S-adenosyl-L-methionine = N(tele)-methyl-L-histidyl-[protein] + S-adenosyl-L-homocysteine + H(+). In terms of biological role, protein-histidine N-methyltransferase that specifically mediates 3-methylhistidine (tele-methylhistidine) methylation of actin at 'His-73'. Histidine methylation of actin is required for smooth muscle contraction of the laboring uterus during delivery. Does not have protein-lysine N-methyltransferase activity and probably only catalyzes histidine methylation of actin. The sequence is that of Actin-histidine N-methyltransferase from Plecturocebus moloch (Dusky titi monkey).